The sequence spans 741 residues: Endoplasmic reticulum membrane sensor NFE2L1 (741 aa).

The chain crosses the membrane as a helical; Signal-anchor for type II membrane protein span at residues 7–24; that stretch reads YLTEGLLQFTILLSLIGV. Disordered stretches follow at residues 108–148 and 198–220; these read DPEG…TEQG and QKEQDVDKELQDGREREDTWSGE. Polar residues predominate over residues 113-131; the sequence is VSGSQPNSGLALESSSGLQ. The interval 191-199 is cholesterol recognition/amino acid consensus (CRAC) region; sequence VFDYSHRQK. Residues 198-216 are compositionally biased toward basic and acidic residues; the sequence is QKEQDVDKELQDGREREDT. 2 N-linked (GlcNAc...) asparagine glycosylation sites follow: Asn-319 and Asn-331. The tract at residues 350-354 is CPD; the sequence is SPEVE. Asn-394 carries N-linked (GlcNAc...) asparagine glycosylation. 2 disordered regions span residues 441 to 501 and 551 to 582; these read EEEF…DSET and SALDSADLPPPSTLKKGSKEKQADFLDKQMSR. The short motif at 447–451 is the Destruction motif element; that stretch reads DSGLS. Low complexity predominate over residues 447-492; the sequence is DSGLSLDSSHSPSSLSSSEGSSSSSSSSSSSSASSSASSSFSEEGA. Residue Ser-497 is modified to Phosphoserine; by CK2. The span at 567-582 shows a compositional bias: basic and acidic residues; the sequence is GSKEKQADFLDKQMSR. Ser-568 carries the post-translational modification Phosphoserine. The bZIP domain occupies 623-686; sequence LIRDIRRRGK…RQMKQKVQSL (64 aa). The interval 625 to 644 is basic motif; that stretch reads RDIRRRGKNKMAAQNCRKRK. A leucine-zipper region spans residues 651-665; sequence LERDVEDLQRDKARL. Residues 722–741 form a disordered region; sequence RTMADQQARRQERKPKDRRK. The short motif at 730–737 is the Nuclear localization signal element; it reads RRQERKPK. Residues 732–741 are compositionally biased toward basic residues; sequence QERKPKDRRK.

Belongs to the bZIP family. CNC subfamily. Interacts with KEAP1. As to quaternary structure, interacts (via CPD region) with FBXW7; leading to its ubiquitination and degradation. Interacts with SYVN1/HRD1; leading to its ubiquitination and degradation. Interacts (when ubiquitinated) with DDI2; leading to its cleavage. In terms of assembly, interacts (via the bZIP domain) with small MAF protein (MAFF, MAFG or MAFK); required for binding to antioxidant response elements (AREs) on DNA. Interacts (via Destruction motif) with BTRC; leading to its ubiquitination and degradation. Interacts with CEBPB; the heterodimer represses expression of DSPP during odontoblast differentiation. Interacts with MOTS-c, a peptide produced by the mitochondrially encoded 12S rRNA MT-RNR1. In terms of processing, cleaved at Leu-104 by the aspartyl protease DDI2 following retrotranslocation, releasing the protein from the endoplasmic reticulum membrane and forming the transcription factor NRF1 that translocates into the nucleus. Ubiquitination is prerequisite for cleavage by aspartyl protease DDI2. Post-translationally, N-glycosylated in normal conditions, when it has a single-pass type II membrane protein topology, with the DNA-binding domain facing the endoplasmic reticulum lumen. Deglycosylated during retrotranslocation to the cytosolic side of the membrane, to have a single-pass type III membrane protein topology with the major part of the protein facing the cytosol. Ubiquitinated by the SCF(FBXW7) complex and SYVN1/HRD1, leading to its degradation by the proteasome. Ubiquitinated during retrotranslocation to the cytosolic side of the membrane: ubiquitination does not lead to degradation and is required for processing by the aspartyl protease DDI2 and subsequent release from the endoplasmic reticulum membrane. In terms of processing, phosphorylation by CK2 at Ser-497 inhibits transcription factor activity, possibly by affecting DNA-binding activity. Phosphorylation at Ser-568 is required for interaction with CEBPB. Post-translationally, ubiquitinated by the SCF(BTRC) complex in the nucleus, leading to its degradation by the proteasome. As to expression, isoform 1: Widely expressed including kidney, brown fat, white fat, large intestine, small intestine, stomach, lung, brain and liver. Isoform 1: Expressed in mouse embryonic fibroblasts (MEF). Isoform 2: Widely expressed including kidney, brown fat, white fat, large intestine, small intestine, stomach, lung, brain and liver. Isoform 2: levels in white fat, lung and liver are increased compared to isoform 1 (at protein level). Isoform 2: levels are elevated in brown fat and brain, but are reduced in liver compared to isoform 1 levels. Isoform 2: Expressed in mouse embryonic fibroblasts (MEF).

The protein localises to the endoplasmic reticulum membrane. It is found in the nucleus. It localises to the cytoplasm. Its function is as follows. Endoplasmic reticulum membrane sensor that translocates into the nucleus in response to various stresses to act as a transcription factor. Constitutes a precursor of the transcription factor NRF1. Able to detect various cellular stresses, such as cholesterol excess, oxidative stress or proteasome inhibition. In response to stress, it is released from the endoplasmic reticulum membrane following cleavage by the protease DDI2 and translocates into the nucleus to form the transcription factor NRF1. Acts as a key sensor of cholesterol excess: in excess cholesterol conditions, the endoplasmic reticulum membrane form of the protein directly binds cholesterol via its CRAC motif, preventing cleavage and release of the transcription factor NRF1, thereby allowing expression of genes promoting cholesterol removal, such as CD36. Involved in proteasome homeostasis: in response to proteasome inhibition, it is released from the endoplasmic reticulum membrane, translocates to the nucleus and activates expression of genes encoding proteasome subunits. CNC-type bZIP family transcription factor that translocates to the nucleus and regulates expression of target genes in response to various stresses. Heterodimerizes with small-Maf proteins (MAFF, MAFG or MAFK) and binds DNA motifs including the antioxidant response elements (AREs), which regulate expression of genes involved in oxidative stress response. Activates or represses expression of target genes, depending on the context. Plays a key role in cholesterol homeostasis by acting as a sensor of cholesterol excess: in low cholesterol conditions, translocates into the nucleus and represses expression of genes involved in defense against cholesterol excess, such as CD36. In excess cholesterol conditions, the endoplasmic reticulum membrane form of the protein directly binds cholesterol via its CRAC motif, preventing cleavage and release of the transcription factor NRF1, thereby allowing expression of genes promoting cholesterol removal. Critical for redox balance in response to oxidative stress: acts by binding the AREs motifs on promoters and mediating activation of oxidative stress response genes, such as GCLC, GCLM, GSS, MT1 and MT2. Plays an essential role during fetal liver hematopoiesis: probably has a protective function against oxidative stress and is involved in lipid homeostasis in the liver. Involved in proteasome homeostasis: in response to proteasome inhibition, mediates the 'bounce-back' of proteasome subunits by translocating into the nucleus and activating expression of genes encoding proteasome subunits. Also involved in regulating glucose flux. Together with CEBPB; represses expression of DSPP during odontoblast differentiation. In response to ascorbic acid induction, activates expression of SP7/Osterix in osteoblasts. In terms of biological role, transcription factor that binds the antioxidant response elements (ARE) consensus sequence on promoters and activates their expression. Functionally, transcription factor that binds the extended kappa 3 site of the TNF-alpha promoter after Fc gamma RIII stimulation and participates in the induction of this cytokine. This chain is Endoplasmic reticulum membrane sensor NFE2L1, found in Mus musculus (Mouse).